The chain runs to 190 residues: RRP15-like protein (190 aa).

A compositionally biased stretch (basic and acidic residues) spans 1 to 11 (MSTKNRDRLVV). 2 disordered regions span residues 1 to 69 (MSTK…TRKE) and 119 to 190 (QKTM…SDED). Over residues 55–66 (QRKKKKVIKKLT) the composition is skewed to basic residues. Positions 59–84 (KKVIKKLTRKEQSLKHSVKEYRIKLA) form a coiled coil. Residues 119 to 153 (QKTMSDAVKEKMTARDRKEARERFDGKNFDSDKFA) show a composition bias toward basic and acidic residues. Residues 167-190 (GEEEDEQMNIGDDEIDAGNYSDED) show a composition bias toward acidic residues.

It belongs to the RRP15 family.

This is RRP15-like protein from Caenorhabditis briggsae.